Consider the following 170-residue polypeptide: Shikimate kinase (170 aa).

An ATP-binding site is contributed by Gly-15–Thr-20. Thr-19 is a Mg(2+) binding site. Residues Asp-37, Arg-61, and Gly-83 each coordinate substrate. Arg-121 serves as a coordination point for ATP. A substrate-binding site is contributed by Arg-140.

The protein belongs to the shikimate kinase family. As to quaternary structure, monomer. Mg(2+) is required as a cofactor.

The protein resides in the cytoplasm. It catalyses the reaction shikimate + ATP = 3-phosphoshikimate + ADP + H(+). It participates in metabolic intermediate biosynthesis; chorismate biosynthesis; chorismate from D-erythrose 4-phosphate and phosphoenolpyruvate: step 5/7. Functionally, catalyzes the specific phosphorylation of the 3-hydroxyl group of shikimic acid using ATP as a cosubstrate. The chain is Shikimate kinase from Neisseria gonorrhoeae (strain ATCC 700825 / FA 1090).